A 239-amino-acid chain; its full sequence is Probable transcriptional regulatory protein BCG9842_B4761 (239 aa).

The protein belongs to the TACO1 family. YeeN subfamily.

The protein resides in the cytoplasm. This Bacillus cereus (strain G9842) protein is Probable transcriptional regulatory protein BCG9842_B4761.